A 175-amino-acid polypeptide reads, in one-letter code: uncharacterized protein (175 aa).

Belongs to the asfivirus B175L family.

This is an uncharacterized protein from Ornithodoros (relapsing fever ticks).